A 529-amino-acid chain; its full sequence is Peptide chain release factor 3 (529 aa).

Positions 11 to 280 (AKRRTFAIIS…GLVKWAPAPM (270 aa)) constitute a tr-type G domain. GTP-binding positions include 20–27 (SHPDAGKT), 88–92 (DTPGH), and 142–145 (NKLD).

This sequence belongs to the TRAFAC class translation factor GTPase superfamily. Classic translation factor GTPase family. PrfC subfamily.

It is found in the cytoplasm. Its function is as follows. Increases the formation of ribosomal termination complexes and stimulates activities of RF-1 and RF-2. It binds guanine nucleotides and has strong preference for UGA stop codons. It may interact directly with the ribosome. The stimulation of RF-1 and RF-2 is significantly reduced by GTP and GDP, but not by GMP. In Photorhabdus laumondii subsp. laumondii (strain DSM 15139 / CIP 105565 / TT01) (Photorhabdus luminescens subsp. laumondii), this protein is Peptide chain release factor 3.